Here is a 270-residue protein sequence, read N- to C-terminus: Putative ABC transporter ATP-binding protein MG304 homolog (270 aa).

The region spanning 2-232 is the ABC transporter domain; it reads LNVTNLSFTY…LHLFHQHHFT (231 aa). Residue 36-43 coordinates ATP; sequence GHNGSGKS.

It belongs to the ABC transporter superfamily.

The chain is Putative ABC transporter ATP-binding protein MG304 homolog from Mycoplasma pneumoniae (strain ATCC 29342 / M129 / Subtype 1) (Mycoplasmoides pneumoniae).